A 440-amino-acid chain; its full sequence is Chromosomal replication initiator protein DnaA (440 aa).

Residues 1-69 (MKERILQEIK…VKVVLGNDAT (69 aa)) are domain I, interacts with DnaA modulators. The segment at 69 to 96 (TFEITYEAFEPHSSYSEPLVKKRAVLLT) is domain II. The tract at residues 97-313 (PLNPDYTFEN…GAIIKLLVYK (217 aa)) is domain III, AAA+ region. 4 residues coordinate ATP: G140, G142, K143, and T144. Residues 314-440 (ETTGKEVDLK…GEISRRALSG (127 aa)) form a domain IV, binds dsDNA region.

Belongs to the DnaA family. As to quaternary structure, oligomerizes as a right-handed, spiral filament on DNA at oriC.

It localises to the cytoplasm. Functionally, plays an essential role in the initiation and regulation of chromosomal replication. ATP-DnaA binds to the origin of replication (oriC) to initiate formation of the DNA replication initiation complex once per cell cycle. Binds the DnaA box (a 9 base pair repeat at the origin) and separates the double-stranded (ds)DNA. Forms a right-handed helical filament on oriC DNA; dsDNA binds to the exterior of the filament while single-stranded (ss)DNA is stabiized in the filament's interior. The ATP-DnaA-oriC complex binds and stabilizes one strand of the AT-rich DNA unwinding element (DUE), permitting loading of DNA polymerase. After initiation quickly degrades to an ADP-DnaA complex that is not apt for DNA replication. Binds acidic phospholipids. In Thermotoga sp. (strain RQ2), this protein is Chromosomal replication initiator protein DnaA.